Reading from the N-terminus, the 227-residue chain is Cytochrome c oxidase subunit 2 (227 aa).

Topologically, residues 1-14 (MAHAAQVGLQDATS) are mitochondrial intermembrane. The chain crosses the membrane as a helical span at residues 15-45 (PIMEELIIFHDHALMIIFLICFLVLYALFLT). Residues 46-59 (LTTKLTNTSISDAQ) are Mitochondrial matrix-facing. Residues 60 to 87 (EMETVWTILPAIILVLIALPSLRILYMT) form a helical membrane-spanning segment. Topologically, residues 88-227 (DEVNDPSFTI…IFEMGPVFTL (140 aa)) are mitochondrial intermembrane. Residues H161, C196, E198, C200, H204, and M207 each contribute to the Cu cation site. E198 contributes to the Mg(2+) binding site.

Belongs to the cytochrome c oxidase subunit 2 family. In terms of assembly, component of the cytochrome c oxidase (complex IV, CIV), a multisubunit enzyme composed of 14 subunits. The complex is composed of a catalytic core of 3 subunits MT-CO1, MT-CO2 and MT-CO3, encoded in the mitochondrial DNA, and 11 supernumerary subunits COX4I, COX5A, COX5B, COX6A, COX6B, COX6C, COX7A, COX7B, COX7C, COX8 and NDUFA4, which are encoded in the nuclear genome. The complex exists as a monomer or a dimer and forms supercomplexes (SCs) in the inner mitochondrial membrane with NADH-ubiquinone oxidoreductase (complex I, CI) and ubiquinol-cytochrome c oxidoreductase (cytochrome b-c1 complex, complex III, CIII), resulting in different assemblies (supercomplex SCI(1)III(2)IV(1) and megacomplex MCI(2)III(2)IV(2)). Found in a complex with TMEM177, COA6, COX18, COX20, SCO1 and SCO2. Interacts with TMEM177 in a COX20-dependent manner. Interacts with COX20. Interacts with COX16. The cofactor is Cu cation.

The protein resides in the mitochondrion inner membrane. It catalyses the reaction 4 Fe(II)-[cytochrome c] + O2 + 8 H(+)(in) = 4 Fe(III)-[cytochrome c] + 2 H2O + 4 H(+)(out). Its function is as follows. Component of the cytochrome c oxidase, the last enzyme in the mitochondrial electron transport chain which drives oxidative phosphorylation. The respiratory chain contains 3 multisubunit complexes succinate dehydrogenase (complex II, CII), ubiquinol-cytochrome c oxidoreductase (cytochrome b-c1 complex, complex III, CIII) and cytochrome c oxidase (complex IV, CIV), that cooperate to transfer electrons derived from NADH and succinate to molecular oxygen, creating an electrochemical gradient over the inner membrane that drives transmembrane transport and the ATP synthase. Cytochrome c oxidase is the component of the respiratory chain that catalyzes the reduction of oxygen to water. Electrons originating from reduced cytochrome c in the intermembrane space (IMS) are transferred via the dinuclear copper A center (CU(A)) of subunit 2 and heme A of subunit 1 to the active site in subunit 1, a binuclear center (BNC) formed by heme A3 and copper B (CU(B)). The BNC reduces molecular oxygen to 2 water molecules using 4 electrons from cytochrome c in the IMS and 4 protons from the mitochondrial matrix. This Pan paniscus (Pygmy chimpanzee) protein is Cytochrome c oxidase subunit 2 (MT-CO2).